A 343-amino-acid chain; its full sequence is S-adenosylmethionine:tRNA ribosyltransferase-isomerase (343 aa).

This sequence belongs to the QueA family. In terms of assembly, monomer.

Its subcellular location is the cytoplasm. It catalyses the reaction 7-aminomethyl-7-carbaguanosine(34) in tRNA + S-adenosyl-L-methionine = epoxyqueuosine(34) in tRNA + adenine + L-methionine + 2 H(+). It functions in the pathway tRNA modification; tRNA-queuosine biosynthesis. In terms of biological role, transfers and isomerizes the ribose moiety from AdoMet to the 7-aminomethyl group of 7-deazaguanine (preQ1-tRNA) to give epoxyqueuosine (oQ-tRNA). This Hydrogenobaculum sp. (strain Y04AAS1) protein is S-adenosylmethionine:tRNA ribosyltransferase-isomerase.